The following is a 213-amino-acid chain: Probable GTP-binding protein EngB (213 aa).

An EngB-type G domain is found at 30–204 (EGFEVAFAGR…YTVLAGWMEL (175 aa)). Residues 38-45 (GRSNAGKS), 64-68 (GRTQL), 82-85 (DLPG), 149-152 (TKAD), and 182-185 (LFSA) contribute to the GTP site. Residues Ser45 and Thr66 each coordinate Mg(2+).

The protein belongs to the TRAFAC class TrmE-Era-EngA-EngB-Septin-like GTPase superfamily. EngB GTPase family. Mg(2+) serves as cofactor.

In terms of biological role, necessary for normal cell division and for the maintenance of normal septation. The sequence is that of Probable GTP-binding protein EngB from Pseudomonas fluorescens (strain ATCC BAA-477 / NRRL B-23932 / Pf-5).